Reading from the N-terminus, the 374-residue chain is Phosphatidylglycerol--prolipoprotein diacylglyceryl transferase (374 aa).

The next 4 helical transmembrane spans lie at 33–53, 155–175, 195–215, and 222–242; these read ICFITGFILGYFIIVPIIALF, LCWFIVFGTLIGARLGAVFFY, LASHGGALGVMLALFFYTSYI, and LSFLRVLDFVAIPSALTAVFI. Residue R243 participates in a 1,2-diacyl-sn-glycero-3-phospho-(1'-sn-glycerol) binding. 3 consecutive transmembrane segments (helical) span residues 279–299, 306–326, and 341–361; these read PVQLYEAFAYLMTFFLLFTLW, LAAGTYAGFLFIFNFSSRFLL, and ILQMGQLLSIPFILFGICLVW.

Belongs to the Lgt family.

It localises to the cell inner membrane. The enzyme catalyses L-cysteinyl-[prolipoprotein] + a 1,2-diacyl-sn-glycero-3-phospho-(1'-sn-glycerol) = an S-1,2-diacyl-sn-glyceryl-L-cysteinyl-[prolipoprotein] + sn-glycerol 1-phosphate + H(+). The protein operates within protein modification; lipoprotein biosynthesis (diacylglyceryl transfer). Its function is as follows. Catalyzes the transfer of the diacylglyceryl group from phosphatidylglycerol to the sulfhydryl group of the N-terminal cysteine of a prolipoprotein, the first step in the formation of mature lipoproteins. The polypeptide is Phosphatidylglycerol--prolipoprotein diacylglyceryl transferase (Protochlamydia amoebophila (strain UWE25)).